The sequence spans 208 residues: Uracil phosphoribosyltransferase (208 aa).

5-phospho-alpha-D-ribose 1-diphosphate contacts are provided by residues R78, R103, and 130–138 (DPMLATANS). Uracil-binding positions include I193 and 198–200 (GDA). Residue D199 coordinates 5-phospho-alpha-D-ribose 1-diphosphate.

Belongs to the UPRTase family. Mg(2+) serves as cofactor.

The catalysed reaction is UMP + diphosphate = 5-phospho-alpha-D-ribose 1-diphosphate + uracil. Its pathway is pyrimidine metabolism; UMP biosynthesis via salvage pathway; UMP from uracil: step 1/1. Its activity is regulated as follows. Allosterically activated by GTP. Its function is as follows. Catalyzes the conversion of uracil and 5-phospho-alpha-D-ribose 1-diphosphate (PRPP) to UMP and diphosphate. The sequence is that of Uracil phosphoribosyltransferase from Brucella abortus biovar 1 (strain 9-941).